Reading from the N-terminus, the 488-residue chain is Malonate-semialdehyde dehydrogenase (488 aa).

NAD(+) contacts are provided by A150, F152, K176, E179, R180, S229, and T251. C284 acts as the Nucleophile in catalysis. An NAD(+)-binding site is contributed by E382.

It belongs to the aldehyde dehydrogenase family. IolA subfamily. As to quaternary structure, homotetramer.

It carries out the reaction 3-oxopropanoate + NAD(+) + CoA + H2O = hydrogencarbonate + acetyl-CoA + NADH + H(+). The catalysed reaction is 2-methyl-3-oxopropanoate + NAD(+) + CoA + H2O = propanoyl-CoA + hydrogencarbonate + NADH + H(+). The protein operates within polyol metabolism; myo-inositol degradation into acetyl-CoA; acetyl-CoA from myo-inositol: step 7/7. Catalyzes the oxidation of malonate semialdehyde (MSA) and methylmalonate semialdehyde (MMSA) into acetyl-CoA and propanoyl-CoA, respectively. Is involved in a myo-inositol catabolic pathway. Bicarbonate, and not CO2, is the end-product of the enzymatic reaction. In Listeria monocytogenes serovar 1/2a (strain ATCC BAA-679 / EGD-e), this protein is Malonate-semialdehyde dehydrogenase.